The sequence spans 357 residues: Membrane-bound lytic murein transglycosylase C (357 aa).

Positions 1-15 (MKKYLLLALLPFLYA) are cleaved as a signal peptide. A lipid anchor (N-palmitoyl cysteine) is attached at Cys-16. Cys-16 is lipidated: S-diacylglycerol cysteine.

It belongs to the transglycosylase Slt family.

It localises to the cell outer membrane. It carries out the reaction Exolytic cleavage of the (1-&gt;4)-beta-glycosidic linkage between N-acetylmuramic acid (MurNAc) and N-acetylglucosamine (GlcNAc) residues in peptidoglycan, from either the reducing or the non-reducing ends of the peptidoglycan chains, with concomitant formation of a 1,6-anhydrobond in the MurNAc residue.. Functionally, murein-degrading enzyme. May play a role in recycling of muropeptides during cell elongation and/or cell division. This is Membrane-bound lytic murein transglycosylase C from Haemophilus influenzae (strain PittEE).